Here is a 348-residue protein sequence, read N- to C-terminus: Putative 4-hydroxythreonine-4-phosphate dehydrogenase 2 (348 aa).

A divalent metal cation contacts are provided by His180, His224, and His279.

The protein belongs to the PdxA family. Homodimer. Zn(2+) serves as cofactor. The cofactor is Mg(2+). Co(2+) is required as a cofactor.

The protein resides in the cytoplasm. It catalyses the reaction 4-(phosphooxy)-L-threonine + NAD(+) = 3-amino-2-oxopropyl phosphate + CO2 + NADH. It functions in the pathway cofactor biosynthesis; pyridoxine 5'-phosphate biosynthesis; pyridoxine 5'-phosphate from D-erythrose 4-phosphate: step 4/5. Functionally, catalyzes the NAD(P)-dependent oxidation of 4-(phosphooxy)-L-threonine (HTP) into 2-amino-3-oxo-4-(phosphooxy)butyric acid which spontaneously decarboxylates to form 3-amino-2-oxopropyl phosphate (AHAP). In Rhizobium meliloti (strain 1021) (Ensifer meliloti), this protein is Putative 4-hydroxythreonine-4-phosphate dehydrogenase 2.